Consider the following 245-residue polypeptide: Polyhedrin (245 aa).

It belongs to the polyhedrin family.

Major component of the virus occlusion bodies, which are large proteinaceous structures (polyhedra), that protect the virus from the outside environment for extended periods until they are ingested by insect larvae. The chain is Polyhedrin (PH) from Orgyia pseudotsugata multicapsid polyhedrosis virus (OpMNPV).